Reading from the N-terminus, the 390-residue chain is S-adenosylmethionine synthase 2 (390 aa).

Glu-9 provides a ligand contact to Mg(2+). Position 15 (His-15) interacts with ATP. Position 43 (Glu-43) interacts with K(+). Positions 56 and 99 each coordinate L-methionine. ATP contacts are provided by residues 167 to 169, 235 to 238, Asp-246, 252 to 253, Ala-269, Lys-273, and Lys-277; these read DGK, SGRF, and RK. Asp-246 provides a ligand contact to L-methionine. Lys-277 provides a ligand contact to L-methionine.

Belongs to the AdoMet synthase family. In terms of assembly, homotetramer. Mn(2+) is required as a cofactor. It depends on Mg(2+) as a cofactor. The cofactor is Co(2+). K(+) serves as cofactor.

It is found in the cytoplasm. The catalysed reaction is L-methionine + ATP + H2O = S-adenosyl-L-methionine + phosphate + diphosphate. It functions in the pathway amino-acid biosynthesis; S-adenosyl-L-methionine biosynthesis; S-adenosyl-L-methionine from L-methionine: step 1/1. In terms of biological role, catalyzes the formation of S-adenosylmethionine from methionine and ATP. The reaction comprises two steps that are both catalyzed by the same enzyme: formation of S-adenosylmethionine (AdoMet) and triphosphate, and subsequent hydrolysis of the triphosphate. This is S-adenosylmethionine synthase 2 (SAMS2) from Nicotiana tabacum (Common tobacco).